Reading from the N-terminus, the 130-residue chain is ATP synthase epsilon chain, chloroplastic (130 aa).

This sequence belongs to the ATPase epsilon chain family. As to quaternary structure, F-type ATPases have 2 components, CF(1) - the catalytic core - and CF(0) - the membrane proton channel. CF(1) has five subunits: alpha(3), beta(3), gamma(1), delta(1), epsilon(1). CF(0) has three main subunits: a, b and c.

It is found in the plastid. The protein localises to the chloroplast thylakoid membrane. Functionally, produces ATP from ADP in the presence of a proton gradient across the membrane. The polypeptide is ATP synthase epsilon chain, chloroplastic (Tupiella akineta (Green alga)).